We begin with the raw amino-acid sequence, 361 residues long: dTDP-glucose 4,6-dehydratase (361 aa).

NAD(+) contacts are provided by residues 11–12 (FI), 32–35 (DKLT), 58–59 (DI), 80–84 (LAAES), and threonine 99. Position 84 (serine 84) interacts with substrate. Threonine 133 is a binding site for substrate. The Proton donor role is filled by aspartate 134. Active-site proton acceptor residues include glutamate 135 and tyrosine 167. Position 167–171 (167–171 (YSASK)) interacts with NAD(+). Asparagine 196 provides a ligand contact to substrate. An NAD(+)-binding site is contributed by asparagine 197. Substrate-binding positions include 206 to 207 (KL), 222 to 224 (PIY), arginine 231, asparagine 266, and 296 to 300 (DRPGH).

Belongs to the NAD(P)-dependent epimerase/dehydratase family. dTDP-glucose dehydratase subfamily. In terms of assembly, homodimer. Requires NAD(+) as cofactor.

The catalysed reaction is dTDP-alpha-D-glucose = dTDP-4-dehydro-6-deoxy-alpha-D-glucose + H2O. Its pathway is carbohydrate biosynthesis; dTDP-L-rhamnose biosynthesis. It functions in the pathway bacterial outer membrane biogenesis; LPS O-antigen biosynthesis. Functionally, catalyzes the dehydration of dTDP-D-glucose to form dTDP-6-deoxy-D-xylo-4-hexulose via a three-step process involving oxidation, dehydration and reduction. The sequence is that of dTDP-glucose 4,6-dehydratase (rfbB) from Escherichia coli.